The following is a 256-amino-acid chain: Enolase-phosphatase E1 (256 aa).

D14 and E16 together coordinate Mg(2+). Substrate contacts are provided by residues 142–143 (SS) and K176. D201 is a Mg(2+) binding site.

It belongs to the HAD-like hydrolase superfamily. MasA/MtnC family. In terms of assembly, monomer. Mg(2+) is required as a cofactor.

The protein localises to the cytoplasm. It is found in the nucleus. The catalysed reaction is 5-methylsulfanyl-2,3-dioxopentyl phosphate + H2O = 1,2-dihydroxy-5-(methylsulfanyl)pent-1-en-3-one + phosphate. It functions in the pathway amino-acid biosynthesis; L-methionine biosynthesis via salvage pathway; L-methionine from S-methyl-5-thio-alpha-D-ribose 1-phosphate: step 3/6. Its pathway is amino-acid biosynthesis; L-methionine biosynthesis via salvage pathway; L-methionine from S-methyl-5-thio-alpha-D-ribose 1-phosphate: step 4/6. Functionally, bifunctional enzyme that catalyzes the enolization of 2,3-diketo-5-methylthiopentyl-1-phosphate (DK-MTP-1-P) into the intermediate 2-hydroxy-3-keto-5-methylthiopentenyl-1-phosphate (HK-MTPenyl-1-P), which is then dephosphorylated to form the acireductone 1,2-dihydroxy-3-keto-5-methylthiopentene (DHK-MTPene). The protein is Enolase-phosphatase E1 of Drosophila yakuba (Fruit fly).